The sequence spans 29 residues: DQGTACTGEHAHSFCLNGGTCRHIQQLGE.

The 28-residue stretch at 2-29 (QGTACTGEHAHSFCLNGGTCRHIQQLGE) folds into the EGF-like domain. Cysteines 6 and 21 form a disulfide.

The protein localises to the secreted. Its subcellular location is the nematocyst. Has both toxic and EGF activity. The chain is Toxin Bcg III 15.67 from Bunodosoma cangicum (Sea anemone).